The primary structure comprises 234 residues: tRNA (guanine-N(1)-)-methyltransferase (234 aa).

Residues Gly115 and 135 to 140 (VGDYIL) each bind S-adenosyl-L-methionine.

This sequence belongs to the RNA methyltransferase TrmD family. Homodimer.

The protein localises to the cytoplasm. The catalysed reaction is guanosine(37) in tRNA + S-adenosyl-L-methionine = N(1)-methylguanosine(37) in tRNA + S-adenosyl-L-homocysteine + H(+). Specifically methylates guanosine-37 in various tRNAs. The polypeptide is tRNA (guanine-N(1)-)-methyltransferase (Rickettsia akari (strain Hartford)).